A 400-amino-acid polypeptide reads, in one-letter code: Phosphoglycerate kinase (400 aa).

Substrate contacts are provided by residues Asp24–Asn26, Arg40, His63–Arg66, Arg121, and Arg154. ATP-binding positions include Lys205, Gly296, Glu327, and Gly356–Ser359.

The protein belongs to the phosphoglycerate kinase family. In terms of assembly, monomer.

It is found in the cytoplasm. It catalyses the reaction (2R)-3-phosphoglycerate + ATP = (2R)-3-phospho-glyceroyl phosphate + ADP. It functions in the pathway carbohydrate degradation; glycolysis; pyruvate from D-glyceraldehyde 3-phosphate: step 2/5. The chain is Phosphoglycerate kinase from Nostoc punctiforme (strain ATCC 29133 / PCC 73102).